Reading from the N-terminus, the 391-residue chain is Pyruvate dehydrogenase E1 component subunit beta-3, chloroplastic (391 aa).

A chloroplast-targeting transit peptide spans M1–V35. Residue E127 coordinates thiamine diphosphate. Residues I180, A228, I229, and N233 each coordinate K(+).

As to quaternary structure, tetramer of 2 alpha and 2 beta subunits. Thiamine diphosphate serves as cofactor.

The protein localises to the plastid. The protein resides in the chloroplast. The enzyme catalyses N(6)-[(R)-lipoyl]-L-lysyl-[protein] + pyruvate + H(+) = N(6)-[(R)-S(8)-acetyldihydrolipoyl]-L-lysyl-[protein] + CO2. The pyruvate dehydrogenase complex catalyzes the overall conversion of pyruvate to acetyl-CoA and CO(2). It contains multiple copies of three enzymatic components: pyruvate dehydrogenase (E1), dihydrolipoamide acetyltransferase (E2) and lipoamide dehydrogenase (E3). This Oryza sativa subsp. japonica (Rice) protein is Pyruvate dehydrogenase E1 component subunit beta-3, chloroplastic.